A 311-amino-acid chain; its full sequence is Ribosomal protein L11 methyltransferase (311 aa).

S-adenosyl-L-methionine is bound by residues threonine 162, glycine 183, aspartate 205, and asparagine 248.

It belongs to the methyltransferase superfamily. PrmA family.

Its subcellular location is the cytoplasm. It catalyses the reaction L-lysyl-[protein] + 3 S-adenosyl-L-methionine = N(6),N(6),N(6)-trimethyl-L-lysyl-[protein] + 3 S-adenosyl-L-homocysteine + 3 H(+). Its function is as follows. Methylates ribosomal protein L11. The protein is Ribosomal protein L11 methyltransferase of Bacillus licheniformis (strain ATCC 14580 / DSM 13 / JCM 2505 / CCUG 7422 / NBRC 12200 / NCIMB 9375 / NCTC 10341 / NRRL NRS-1264 / Gibson 46).